Consider the following 129-residue polypeptide: Tumor necrosis factor receptor superfamily member 12A (129 aa).

A signal peptide spans Met1–Gly27. Over Glu28–Pro80 the chain is Extracellular. 3 disulfide bridges follow: Cys36–Cys49, Cys52–Cys67, and Cys55–Cys64. The stretch at Cys36–Cys67 is one TNFR-Cys; atypical repeat. Residues Ile81–Trp101 traverse the membrane as a helical segment. At Arg102 to Gln129 the chain is on the cytoplasmic side.

In terms of assembly, associates with TRAF1 and TRAF2, and probably also with TRAF3. As to expression, highly expressed in heart, placenta and kidney. Intermediate expression in lung, skeletal muscle and pancreas.

Its subcellular location is the membrane. In terms of biological role, receptor for TNFSF12/TWEAK. Weak inducer of apoptosis in some cell types. Promotes angiogenesis and the proliferation of endothelial cells. May modulate cellular adhesion to matrix proteins. The protein is Tumor necrosis factor receptor superfamily member 12A (TNFRSF12A) of Homo sapiens (Human).